The sequence spans 102 residues: NADH-quinone oxidoreductase subunit K (102 aa).

3 helical membrane-spanning segments follow: residues 6–26, 30–50, and 65–85; these read MEHG…GLLI, LLYI…AFVV, and ILVI…LLLL.

This sequence belongs to the complex I subunit 4L family. NDH-1 is composed of 13 different subunits. Subunits NuoA, H, J, K, L, M, N constitute the membrane sector of the complex.

It localises to the cell inner membrane. It catalyses the reaction a quinone + NADH + 5 H(+)(in) = a quinol + NAD(+) + 4 H(+)(out). Its function is as follows. NDH-1 shuttles electrons from NADH, via FMN and iron-sulfur (Fe-S) centers, to quinones in the respiratory chain. The immediate electron acceptor for the enzyme in this species is believed to be ubiquinone. Couples the redox reaction to proton translocation (for every two electrons transferred, four hydrogen ions are translocated across the cytoplasmic membrane), and thus conserves the redox energy in a proton gradient. This Shewanella oneidensis (strain ATCC 700550 / JCM 31522 / CIP 106686 / LMG 19005 / NCIMB 14063 / MR-1) protein is NADH-quinone oxidoreductase subunit K.